Consider the following 331-residue polypeptide: tRNA N6-adenosine threonylcarbamoyltransferase (331 aa).

The a divalent metal cation site is built by His-108, His-112, and Tyr-129. Substrate-binding positions include 129-133 (YASGG), Asp-161, Gly-176, Glu-180, and Asn-261. Residue Asp-289 participates in a divalent metal cation binding.

This sequence belongs to the KAE1 / TsaD family. As to quaternary structure, component of the EKC/KEOPS complex composed of at least BUD32, CGI121, GON7, KAE1 and PCC1; the whole complex dimerizes. A divalent metal cation is required as a cofactor.

The protein resides in the cytoplasm. The protein localises to the nucleus. It catalyses the reaction L-threonylcarbamoyladenylate + adenosine(37) in tRNA = N(6)-L-threonylcarbamoyladenosine(37) in tRNA + AMP + H(+). Its function is as follows. Component of the EKC/KEOPS complex that is required for the formation of a threonylcarbamoyl group on adenosine at position 37 (t(6)A37) in tRNAs that read codons beginning with adenine. The complex is probably involved in the transfer of the threonylcarbamoyl moiety of threonylcarbamoyl-AMP (TC-AMP) to the N6 group of A37. KAE1 likely plays a direct catalytic role in this reaction, but requires other protein(s) of the complex to fulfill this activity. The EKC/KEOPS complex also promotes both telomere uncapping and telomere elongation. The complex is required for efficient recruitment of transcriptional coactivators. The polypeptide is tRNA N6-adenosine threonylcarbamoyltransferase (Encephalitozoon cuniculi (strain GB-M1) (Microsporidian parasite)).